Here is a 102-residue protein sequence, read N- to C-terminus: Small ribosomal subunit protein uS10 (102 aa).

The segment at 37–61 is disordered; sequence PIPLPTKSLKITTRKSTDGEGSSSF.

It belongs to the universal ribosomal protein uS10 family. In terms of assembly, part of the 30S ribosomal subunit.

Functionally, involved in the binding of tRNA to the ribosomes. The chain is Small ribosomal subunit protein uS10 from Methanococcus vannielii (strain ATCC 35089 / DSM 1224 / JCM 13029 / OCM 148 / SB).